The primary structure comprises 338 residues: Glycerol-3-phosphate dehydrogenase [NAD(P)+] (338 aa).

Residues S13, W14, and K108 each contribute to the NADPH site. The sn-glycerol 3-phosphate site is built by K108, G139, and S141. A143 contributes to the NADPH binding site. The sn-glycerol 3-phosphate site is built by K194, D247, S257, R258, and N259. K194 acts as the Proton acceptor in catalysis. R258 contributes to the NADPH binding site. V282 and E284 together coordinate NADPH.

Belongs to the NAD-dependent glycerol-3-phosphate dehydrogenase family.

Its subcellular location is the cytoplasm. It carries out the reaction sn-glycerol 3-phosphate + NAD(+) = dihydroxyacetone phosphate + NADH + H(+). The enzyme catalyses sn-glycerol 3-phosphate + NADP(+) = dihydroxyacetone phosphate + NADPH + H(+). It participates in membrane lipid metabolism; glycerophospholipid metabolism. In terms of biological role, catalyzes the reduction of the glycolytic intermediate dihydroxyacetone phosphate (DHAP) to sn-glycerol 3-phosphate (G3P), the key precursor for phospholipid synthesis. This Streptococcus pyogenes serotype M12 (strain MGAS9429) protein is Glycerol-3-phosphate dehydrogenase [NAD(P)+].